The following is a 1177-amino-acid chain: DNA-directed RNA polymerase subunit beta' (1177 aa).

Zn(2+) contacts are provided by C60, C62, C75, and C78. 3 residues coordinate Mg(2+): D450, D452, and D454. Zn(2+) contacts are provided by C795, C869, C876, and C879.

This sequence belongs to the RNA polymerase beta' chain family. As to quaternary structure, the RNAP catalytic core consists of 2 alpha, 1 beta, 1 beta' and 1 omega subunit. When a sigma factor is associated with the core the holoenzyme is formed, which can initiate transcription. Mg(2+) serves as cofactor. It depends on Zn(2+) as a cofactor.

It catalyses the reaction RNA(n) + a ribonucleoside 5'-triphosphate = RNA(n+1) + diphosphate. DNA-dependent RNA polymerase catalyzes the transcription of DNA into RNA using the four ribonucleoside triphosphates as substrates. The sequence is that of DNA-directed RNA polymerase subunit beta' from Clostridium botulinum (strain Alaska E43 / Type E3).